The sequence spans 123 residues: MARYEEVSVSGFEEFHRAVEQHNGKTIFAYFTGSKDAGGKSWCPDCVQAEPVVREGLKHISEGCVFIYCQVGEKPYWKDPNNDFRKNLKVTAVPTLLKYGTPQKLVESECLQANLVEMLFSED.

Ala2 carries the post-translational modification N-acetylalanine. Residues 41 to 123 (SWCPDCVQAE…NLVEMLFSED (83 aa)) form the Thioredoxin domain. Catalysis depends on nucleophile residues Cys43 and Cys46. Cys43 and Cys46 form a disulfide bridge.

This sequence belongs to the thioredoxin family. Interacts with TRXR1 and DYNLL1/DNCL1. Post-translationally, the oxidized protein is reduced by TRXR1. As to expression, ubiquitously expressed in cell lines.

It is found in the cytoplasm. Disulfide reductase. May participate in various redox reactions through the reversible oxidation of its active center dithiol to a disulfide and catalyze dithiol-disulfide exchange reactions. Modulates TNF-alpha signaling and NF-kappa-B activation. Has peroxidase activity and may contribute to the elimination of cellular hydrogen peroxide. This chain is Thioredoxin domain-containing protein 17 (TXNDC17), found in Homo sapiens (Human).